Here is a 313-residue protein sequence, read N- to C-terminus: Acetaldehyde dehydrogenase 3 (313 aa).

Residue 11-14 (SGNI) coordinates NAD(+). The active-site Acyl-thioester intermediate is the Cys129. Residues 160–168 (SAGPGTRAN) and Asn288 each bind NAD(+).

Belongs to the acetaldehyde dehydrogenase family.

The catalysed reaction is acetaldehyde + NAD(+) + CoA = acetyl-CoA + NADH + H(+). The protein is Acetaldehyde dehydrogenase 3 of Rhizorhabdus wittichii (strain DSM 6014 / CCUG 31198 / JCM 15750 / NBRC 105917 / EY 4224 / RW1) (Sphingomonas wittichii).